A 761-amino-acid polypeptide reads, in one-letter code: Putative pentatricopeptide repeat-containing protein At2g02150 (761 aa).

17 PPR repeats span residues 141 to 175 (SVESYCIVAHILFCARMYYDANSVLKEMVLSKADC), 191 to 225 (GFGVFDALFSVLIDLGMLEEAIQCFSKMKRFRVFP), 226 to 260 (KTRSCNGLLHRFAKLGKTDDVKRFFKDMIGAGARP), 261 to 295 (TVFTYNIMIDCMCKEGDVEAARGLFEEMKFRGLVP), 296 to 330 (DTVTYNSMIDGFGKVGRLDDTVCFFEEMKDMCCEP), 331 to 365 (DVITYNALINCFCKFGKLPIGLEFYREMKGNGLKP), 366 to 400 (NVVSYSTLVDAFCKEGMMQQAIKFYVDMRRVGLVP), 401 to 435 (NEYTYTSLIDANCKIGNLSDAFRLGNEMLQVGVEW), 436 to 470 (NVVTYTALIDGLCDAERMKEAEELFGKMDTAGVIP), 471 to 505 (NLASYNALIHGFVKAKNMDRALELLNELKGRGIKP), 506 to 540 (DLLLYGTFIWGLCSLEKIEAAKVVMNEMKECGIKA), 541 to 575 (NSLIYTTLMDAYFKSGNPTEGLHLLDEMKELDIEV), 576 to 606 (TVVTFCVLIDGLCKNKLVSKAVDYFNRISND), 612 to 646 (NAAIFTAMIDGLCKDNQVEAATTLFEQMVQKGLVP), 647 to 681 (DRTAYTSLMDGNFKQGNVLEALALRDKMAEIGMKL), 682 to 716 (DLLAYTSLVWGLSHCNQLQKARSFLEEMIGEGIHP), and 717 to 751 (DEVLCISVLKKHYELGCIDEAVELQSYLMKHQLLT).

Belongs to the PPR family. P subfamily.

The polypeptide is Putative pentatricopeptide repeat-containing protein At2g02150 (Arabidopsis thaliana (Mouse-ear cress)).